The following is a 246-amino-acid chain: MTTGDCCHLPGSLCDCTGSATFLKSLEESDLGRPQYVTQVTAKDGQLLSTVIKALGTQSDGPICRICHEGGNGERLLSPCDCTGTLGTVHKTCLEKWLSSSNTSYCELCHTEFAVERRPRPVTEWLKDPGPRNEKRTLFCDMVCFLFITPLAAISGWLCLRGAQDHLQFNSRLEAVGLIALTIALFTIYVLWTLVSFRYHCQLYSEWRRTNQKVLLLIPDSKTAPTTHHSLLSSKLLKSASDETTV.

Residues 56-116 (GTQSDGPICR…ELCHTEFAVE (61 aa)) form an RING-CH-type zinc finger. Zn(2+) contacts are provided by Cys-64, Cys-67, Cys-80, Cys-82, His-90, Cys-93, Cys-106, and Cys-109. A run of 2 helical transmembrane segments spans residues 138–158 (LFCD…SGWL) and 175–195 (AVGL…WTLV).

It is found in the endoplasmic reticulum membrane. It localises to the lysosome membrane. The protein resides in the endosome membrane. The catalysed reaction is S-ubiquitinyl-[E2 ubiquitin-conjugating enzyme]-L-cysteine + [acceptor protein]-L-lysine = [E2 ubiquitin-conjugating enzyme]-L-cysteine + N(6)-ubiquitinyl-[acceptor protein]-L-lysine.. Its pathway is protein modification; protein ubiquitination. Its function is as follows. E3 ubiquitin-protein ligase which may be involved in endosomal trafficking. E3 ubiquitin ligases accept ubiquitin from an E2 ubiquitin-conjugating enzyme in the form of a thioester and then directly transfer the ubiquitin to targeted substrates. The protein is E3 ubiquitin-protein ligase MARCHF2 (marchf2) of Xenopus tropicalis (Western clawed frog).